The chain runs to 234 residues: Nuclear transcription factor Y subunit C-1 (234 aa).

Disordered regions lie at residues 1–20 and 205–234; these read MDTNNQQPPPSAAGIPPPPP and SVWQTSTGTGDDVSYGSGGSSGQGNLDGQG. Over residues 7–20 the composition is skewed to pro residues; sequence QPPPSAAGIPPPPP. The span at 209–219 shows a compositional bias: low complexity; sequence TSTGTGDDVSY. Residues 220 to 234 show a composition bias toward gly residues; sequence GSGGSSGQGNLDGQG.

It belongs to the NFYC/HAP5 subunit family. Heterotrimeric transcription factor composed of three components, NF-YA, NF-YB and NF-YC. NF-YB and NF-YC must interact and dimerize for NF-YA association and DNA binding. As to expression, ubiquitous. Present in etiolated seedlings.

It localises to the nucleus. Functionally, stimulates the transcription of various genes by recognizing and binding to a CCAAT motif in promoters. This is Nuclear transcription factor Y subunit C-1 (NFYC1) from Arabidopsis thaliana (Mouse-ear cress).